The primary structure comprises 818 residues: Serine/threonine-protein phosphatase 4 regulatory subunit 3 (818 aa).

Residues 1-100 (MTDTRRRVKV…DEIWEKICQV (100 aa)) enclose the WH1 domain. The disordered stretch occupies residues 718 to 818 (LAKSSFSGRQ…PPSKKSRLSS (101 aa)). The segment covering 721-730 (SSFSGRQNPS) has biased composition (polar residues). Positions 736-756 (SGSTKTSLSSPPPSASLSPGS) are enriched in low complexity. Residues 788–804 (YPDDDEEEEDDDDEESK) are compositionally biased toward acidic residues.

This sequence belongs to the SMEK family. Serine/threonine-protein phosphatase 4 (PP4) occurs in different assemblies of the catalytic and one or more regulatory subunits.

In terms of biological role, regulatory subunit of serine/threonine-protein phosphatase 4. This chain is Serine/threonine-protein phosphatase 4 regulatory subunit 3 (smek1), found in Tetraodon nigroviridis (Spotted green pufferfish).